Consider the following 291-residue polypeptide: Homoserine kinase (291 aa).

80–90 (RPASGLGSSAA) contributes to the ATP binding site.

The protein belongs to the GHMP kinase family. Homoserine kinase subfamily.

The protein localises to the cytoplasm. It catalyses the reaction L-homoserine + ATP = O-phospho-L-homoserine + ADP + H(+). It functions in the pathway amino-acid biosynthesis; L-threonine biosynthesis; L-threonine from L-aspartate: step 4/5. Functionally, catalyzes the ATP-dependent phosphorylation of L-homoserine to L-homoserine phosphate. The chain is Homoserine kinase from Haloarcula marismortui (strain ATCC 43049 / DSM 3752 / JCM 8966 / VKM B-1809) (Halobacterium marismortui).